Reading from the N-terminus, the 343-residue chain is Flavone 3'-O-methyltransferase OMT2 (343 aa).

N107 is a (E)-ferulate binding site. S-adenosyl-L-homocysteine-binding residues include G184, D207, D227, M228, M240, and K241. Residue H245 is the Proton acceptor of the active site. D246 contacts (E)-5-hydroxyferulate. Active-site residues include E273 and E305.

This sequence belongs to the class I-like SAM-binding methyltransferase superfamily. Cation-independent O-methyltransferase family. COMT subfamily. In terms of assembly, homodimer.

It catalyses the reaction (E)-5-hydroxyferulate + S-adenosyl-L-methionine = (E)-sinapate + S-adenosyl-L-homocysteine + H(+). The enzyme catalyses luteolin + S-adenosyl-L-methionine = chrysoeriol + S-adenosyl-L-homocysteine + H(+). The catalysed reaction is quercetin + S-adenosyl-L-methionine = isorhamnetin + S-adenosyl-L-homocysteine + H(+). It carries out the reaction (E)-caffeate + S-adenosyl-L-methionine = (E)-ferulate + S-adenosyl-L-homocysteine + H(+). It catalyses the reaction a 3'-hydroxyflavone + S-adenosyl-L-methionine = a 3'-methoxyflavone + S-adenosyl-L-homocysteine + H(+). It participates in flavonoid metabolism. Its function is as follows. Catalyzes the 3'-O-methylation of the flavonoids luteolin and quercetin. Catalyzes the 3- of 5-O-methylation of the phenylpropanoids caffeate and 5-hydroxyferulate. Substrate preference is 5-hydroxyferulate &gt; luteolin &gt; quercetin &gt; caffeate. Apigenin, kempferol and 3,4-dimethylquercetin do not seem to be substrates for methylation. The sequence is that of Flavone 3'-O-methyltransferase OMT2 from Chrysosplenium americanum (American golden saxifrage).